The chain runs to 152 residues: Snaclec coagulation factor IX/factor X-binding protein subunit A (152 aa).

An N-terminal signal peptide occupies residues 1–23 (MGRFIFLSFGLLVVFLSLSGTGA). 3 cysteine pairs are disulfide-bonded: C25–C36, C53–C150, and C125–C142. The C-type lectin domain occupies 32–151 (YEGHCYNIFH…CGERNPFVCE (120 aa)). Ca(2+)-binding residues include S64, E66, and E70. Position 151 (E151) interacts with Ca(2+).

It belongs to the snaclec family. Heterodimer of subunits A and B; disulfide-linked. Expressed by the venom gland.

The protein resides in the secreted. Functionally, anticoagulant protein which binds to the gamma-carboxyglutamic acid-domain regions of factors IX (F9) and factor X (F10) in the presence of calcium with a 1 to 1 stoichiometry. The protein is Snaclec coagulation factor IX/factor X-binding protein subunit A of Gloydius halys (Chinese water mocassin).